The primary structure comprises 104 residues: Inner membrane protein YjeO (104 aa).

Residues 1 to 5 are Cytoplasmic-facing; that stretch reads MSARM. A helical transmembrane segment spans residues 6-26; it reads FVLCCIWFIVAFLWITITSAL. Residues 27–52 are Periplasmic-facing; the sequence is DKEWMIDGRGINNVCDVLMYLEEDDT. Residues 53–73 traverse the membrane as a helical segment; the sequence is RDVGVIMTLPLFFPFLWFALW. Topologically, residues 74 to 77 are cytoplasmic; it reads RKKR. Residues 78-98 traverse the membrane as a helical segment; the sequence is GWFMYATALAIFGYWLWQFFL. The Periplasmic portion of the chain corresponds to 99 to 104; that stretch reads RYQFCL.

It is found in the cell inner membrane. In Escherichia coli (strain K12), this protein is Inner membrane protein YjeO (yjeO).